Here is a 157-residue protein sequence, read N- to C-terminus: ATP synthase subunit b (157 aa).

The chain crosses the membrane as a helical span at residues 7–29; the sequence is MFGQLIMFTMFTWFCMKFVWPPI.

The protein belongs to the ATPase B chain family. In terms of assembly, F-type ATPases have 2 components, F(1) - the catalytic core - and F(0) - the membrane proton channel. F(1) has five subunits: alpha(3), beta(3), gamma(1), delta(1), epsilon(1). F(0) has three main subunits: a(1), b(2) and c(10-14). The alpha and beta chains form an alternating ring which encloses part of the gamma chain. F(1) is attached to F(0) by a central stalk formed by the gamma and epsilon chains, while a peripheral stalk is formed by the delta and b chains.

The protein localises to the cell inner membrane. Functionally, f(1)F(0) ATP synthase produces ATP from ADP in the presence of a proton or sodium gradient. F-type ATPases consist of two structural domains, F(1) containing the extramembraneous catalytic core and F(0) containing the membrane proton channel, linked together by a central stalk and a peripheral stalk. During catalysis, ATP synthesis in the catalytic domain of F(1) is coupled via a rotary mechanism of the central stalk subunits to proton translocation. Its function is as follows. Component of the F(0) channel, it forms part of the peripheral stalk, linking F(1) to F(0). This Ruthia magnifica subsp. Calyptogena magnifica protein is ATP synthase subunit b.